The sequence spans 236 residues: Glucosamine-6-phosphate deaminase (236 aa).

Residue Asp-62 is the Proton acceptor; for enolization step of the active site. Residue Asn-128 is the For ring-opening step of the active site. His-130 acts as the Proton acceptor; for ring-opening step in catalysis. Glu-135 acts as the For ring-opening step in catalysis.

The protein belongs to the glucosamine/galactosamine-6-phosphate isomerase family. NagB subfamily.

The catalysed reaction is alpha-D-glucosamine 6-phosphate + H2O = beta-D-fructose 6-phosphate + NH4(+). Its pathway is amino-sugar metabolism; N-acetylneuraminate degradation; D-fructose 6-phosphate from N-acetylneuraminate: step 5/5. Catalyzes the reversible isomerization-deamination of glucosamine 6-phosphate (GlcN6P) to form fructose 6-phosphate (Fru6P) and ammonium ion. This chain is Glucosamine-6-phosphate deaminase, found in Pediococcus pentosaceus (strain ATCC 25745 / CCUG 21536 / LMG 10740 / 183-1w).